A 229-amino-acid chain; its full sequence is Ribonuclease 3 (229 aa).

One can recognise an RNase III domain in the interval 7 to 132 (LRAFESRIGH…VIAAVYLDAG (126 aa)). Glu-45 contributes to the Mg(2+) binding site. Residue Asp-49 is part of the active site. Mg(2+)-binding residues include Asp-118 and Glu-121. The active site involves Glu-121. The region spanning 157 to 226 (DAKTALQEWA…ARALLARMEA (70 aa)) is the DRBM domain.

Belongs to the ribonuclease III family. In terms of assembly, homodimer. Mg(2+) serves as cofactor.

The protein localises to the cytoplasm. It carries out the reaction Endonucleolytic cleavage to 5'-phosphomonoester.. Its function is as follows. Digests double-stranded RNA. Involved in the processing of primary rRNA transcript to yield the immediate precursors to the large and small rRNAs (23S and 16S). Processes some mRNAs, and tRNAs when they are encoded in the rRNA operon. Processes pre-crRNA and tracrRNA of type II CRISPR loci if present in the organism. The sequence is that of Ribonuclease 3 from Cereibacter sphaeroides (strain ATCC 17025 / ATH 2.4.3) (Rhodobacter sphaeroides).